The following is a 194-amino-acid chain: SAYSvFN domain-containing protein 1 (194 aa).

The segment covering methionine 1 to alanine 10 has biased composition (basic and acidic residues). Disordered stretches follow at residues methionine 1–alanine 43 and proline 58–arginine 104. Topologically, residues methionine 1 to lysine 116 are cytoplasmic. The span at serine 22–glycine 32 shows a compositional bias: polar residues. A compositionally biased stretch (pro residues) spans proline 82 to leucine 101. Residues threonine 102–lysine 116 form a middle helical (MH) region. Residues valine 117–phenylalanine 137 constitute an intramembrane region (helical). At valine 138–arginine 194 the chain is on the cytoplasmic side.

Belongs to the SAYSD1 family. As to quaternary structure, associates (via N-terminus) with ribosomes.

It localises to the endoplasmic reticulum membrane. Its subcellular location is the cytoplasmic vesicle membrane. Ufmylation 'reader' component of a translocation-associated quality control pathway, a mechanism that takes place when a ribosome has stalled during translation, and which is required to degrade clogged substrates. Specifically recognizes and binds ufmylated ribosomes when a ribosome has stalled, promoting the transport of stalled nascent chain via the TRAPP complex to lysosomes for degradation. This chain is SAYSvFN domain-containing protein 1 (SAYSD1), found in Bos taurus (Bovine).